The sequence spans 90 residues: Putative cytochrome c oxidase subunit 5b-like (90 aa).

The Zn(2+) site is built by C43, C67, and C70.

This sequence belongs to the cytochrome c oxidase subunit 5B (TC 3.D.4.11) family.

The sequence is that of Putative cytochrome c oxidase subunit 5b-like from Arabidopsis thaliana (Mouse-ear cress).